A 383-amino-acid polypeptide reads, in one-letter code: NADH-quinone oxidoreductase subunit D 1 (383 aa).

The protein belongs to the complex I 49 kDa subunit family. In terms of assembly, NDH-1 is composed of 14 different subunits. Subunits NuoB, C, D, E, F, and G constitute the peripheral sector of the complex.

Its subcellular location is the cell membrane. The enzyme catalyses a quinone + NADH + 5 H(+)(in) = a quinol + NAD(+) + 4 H(+)(out). In terms of biological role, NDH-1 shuttles electrons from NADH, via FMN and iron-sulfur (Fe-S) centers, to quinones in the respiratory chain. The immediate electron acceptor for the enzyme in this species is believed to be a menaquinone. Couples the redox reaction to proton translocation (for every two electrons transferred, four hydrogen ions are translocated across the cytoplasmic membrane), and thus conserves the redox energy in a proton gradient. The polypeptide is NADH-quinone oxidoreductase subunit D 1 (Streptomyces coelicolor (strain ATCC BAA-471 / A3(2) / M145)).